The following is a 674-amino-acid chain: Transcription activator of gluconeogenesis PMAA_028970 (674 aa).

The disordered stretch occupies residues 1–46 (MMDTDKDDLPSATDHSEHESGDAVKVEGGASKTASNSKDPSRPRRK). Residues 14–25 (DHSEHESGDAVK) show a composition bias toward basic and acidic residues. The segment at residues 52–80 (CFACQRAHLTCGDERPCQRCIKRGLQDAC) is a DNA-binding region (zn(2)-C6 fungal-type). Disordered stretches follow at residues 117 to 181 (ISPT…ATPA), 250 to 321 (TGAG…SGLY), 344 to 374 (IGSN…SPMK), and 519 to 557 (NLNV…PGPN). A compositionally biased stretch (polar residues) spans 120-148 (TEYTQNGTNNAQQQQQKSGTIYASSTPSY). A compositionally biased stretch (low complexity) spans 149–163 (NNNNGTFDTNNATNT). 2 stretches are compositionally biased toward polar residues: residues 269–278 (GQRSNSQQFG) and 285–294 (TTESPSQQSF). 2 stretches are compositionally biased toward low complexity: residues 348 to 366 (TFAS…IAPS) and 529 to 540 (NTSSQSDSTSSS).

Belongs to the ERT1/acuK family.

The protein resides in the nucleus. Transcription factor which regulates nonfermentable carbon utilization. Activator of gluconeogenetic genes. The polypeptide is Transcription activator of gluconeogenesis PMAA_028970 (Talaromyces marneffei (strain ATCC 18224 / CBS 334.59 / QM 7333) (Penicillium marneffei)).